Here is a 350-residue protein sequence, read N- to C-terminus: Transmembrane protein 115 (350 aa).

Topologically, residues 1-19 (MQRALPGARQHLGAILASA) are cytoplasmic. Residues 1-205 (MQRALPGARQ…FGLLSSWVYL (205 aa)) are mediates homooligomerization. Residues 20 to 40 (SVVVKALCAVVLFLYLLSFAV) form a helical membrane-spanning segment. The Lumenal segment spans residues 41–97 (DTGCLAVTPGYLFPPNFWIWTLATHGLMEQHVWDVAISLATVVVAGRLLEPLWGALE). Residues 98–118 (LLIFFSVVNVSVGLLGALAYL) traverse the membrane as a helical segment. The Cytoplasmic segment spans residues 119–126 (LTYMASFN). The chain crosses the membrane as a helical span at residues 127 to 147 (LVYLFTIRIHGALGFLGGVLV). The Lumenal segment spans residues 148 to 165 (ALKQTMGDCVVLRVPQVR). A helical membrane pass occupies residues 166–186 (VSVVPMLLLALLLLLRLATLL). Residues 187 to 350 (QSPALASYGF…LITLETAPLL (164 aa)) lie on the Cytoplasmic side of the membrane. The interval 206–229 (RFYQRHSRGRGDMADHFAFATFFP) is mediates localization to the Golgi. The disordered stretch occupies residues 299 to 350 (EDQSAWPSMDDDEEEAGAKTDSPLPLEEASTPPGKVTVPESSLITLETAPLL). The residue at position 329 (threonine 329) is a Phosphothreonine.

This sequence belongs to the TMEM115 family. As to quaternary structure, homooligomer. Interacts with COPB1. May interact with LMAN1. Interacts with the COG complex; probably through COG3.

Its subcellular location is the golgi apparatus. The protein localises to the golgi stack membrane. Functionally, may play a role in retrograde transport of proteins from the Golgi to the endoplasmic reticulum. May indirectly play a role in protein glycosylation in the Golgi. This is Transmembrane protein 115 from Mus musculus (Mouse).